The primary structure comprises 1265 residues: Nestin (1265 aa).

Residues 1–16 form a head region; sequence MELLGVRQPFGPQFQE. The tract at residues 17–52 is coil 1A; the sequence is EKYQMLELNHRLESYLGRVKLLEEENKLLREEIHTL. Positions 17-324 constitute an IF rod domain; sequence EKYQMLELNH…ALLDSEGLRI (308 aa). Residues 53–64 form a linker 1 region; it reads KSSRDPAGQRKA. The tract at residues 65–160 is coil 1B; sequence QEEALSQARR…QVHQENMETM (96 aa). A linker 12 region spans residues 161–183; it reads QASLKQTKQVLMAPQRVQATSIP. The interval 184-203 is coil 2A; that stretch reads DLGQEYGYKAAQAWQEAANN. The segment at 204–206 is linker 2; sequence YQK. A coil 2B region spans residues 207–324; it reads QVGRLEESLN…ALLDSEGLRI (118 aa). The segment at 325-1265 is tail; sequence DRPTPNKTSS…EGDSWSSGDE (941 aa). A compositionally biased stretch (polar residues) spans 383 to 402; sequence PSWTLTRGTPQRPPSSTSMT. Disordered stretches follow at residues 383-521, 667-830, 863-1073, 1093-1116, and 1232-1265; these read PSWT…TEVS, FEVE…PDME, HESL…KASQ, AQTT…LESS, and IRDD…SGDE. Residues 403–418 show a composition bias toward basic and acidic residues; sequence EKTEDHISEETKRSAE. Residues 422 to 441 show a composition bias toward polar residues; it reads DQLQQEKVQQDWTLESTLPK. Basic and acidic residues predominate over residues 444–459; that stretch reads AEPKPELQPEEIKVED. Polar residues predominate over residues 479-496; the sequence is LTSVPAEQQGSMSQTPET. Composition is skewed to acidic residues over residues 508-520 and 730-739; these read EVSE…DTEV and LNEDQSEAEE. Basic and acidic residues-rich tracts occupy residues 784–796, 803–819, and 863–897; these read YKSD…HIGE, EKER…RFNT, and HESL…KEED. A compositionally biased stretch (polar residues) spans 901–910; that stretch reads FEQNENQQLT. Positions 911–935 are enriched in basic and acidic residues; the sequence is EHQHVHTEQVEDKPVHSHETQEHVN. Residues 943–956 show a composition bias toward low complexity; the sequence is SERSQQEQLEESSL. The segment covering 1015-1043 has biased composition (polar residues); the sequence is PNASQCFQNTSLLAAATPNEQPLTFTNEV. A compositionally biased stretch (basic and acidic residues) spans 1061–1070; sequence SEEKSTDEPK. Composition is skewed to polar residues over residues 1105-1116 and 1242-1251; these read SISPVNENLESS and PAQSKIVQSD. Residues 1252–1265 are compositionally biased toward acidic residues; that stretch reads DSADEGDSWSSGDE.

Belongs to the intermediate filament family. As to quaternary structure, forms homodimers and homotetramers in vitro. In mixtures with other intermediate filament proteins such as vimentin and alpha-internexin, preferentially forms heterodimers. In terms of tissue distribution, widely expressed throughout the developing nervous system at 24 hours post-fertilization (hpf). As development progresses, expression becomes restricted to proliferative zones of the developing and postembryonic central nervous system. In the peripheral nervous system, expressed in the cranial ganglia. Also expressed in mesodermal muscle precursor cells and in cranial mesenchymal tissue.

Functionally, promotes the disassembly of phosphorylated vimentin intermediate filaments (IF) during mitosis and may play a role in the trafficking and distribution of IF proteins and other cellular factors to daughter cells during progenitor cell division. Required for survival, renewal and mitogen-stimulated proliferation of neural progenitor cells. Required for brain and eye development. This is Nestin (nes) from Danio rerio (Zebrafish).